The primary structure comprises 472 residues: 2-oxoisovalerate dehydrogenase subunit alpha 2, mitochondrial (472 aa).

Thiamine diphosphate is bound at residue 185–187; the sequence is QYR. S234, T239, and Q240 together coordinate K(+).

The protein belongs to the BCKDHA family. Heterotetramer of alpha and beta chains. Thiamine diphosphate is required as a cofactor.

It localises to the mitochondrion matrix. The catalysed reaction is N(6)-[(R)-lipoyl]-L-lysyl-[protein] + 3-methyl-2-oxobutanoate + H(+) = N(6)-[(R)-S(8)-2-methylpropanoyldihydrolipoyl]-L-lysyl-[protein] + CO2. Its function is as follows. The branched-chain alpha-keto dehydrogenase complex catalyzes the overall conversion of alpha-keto acids to acyl-CoA and CO(2). It contains multiple copies of three enzymatic components: branched-chain alpha-keto acid decarboxylase (E1), lipoamide acyltransferase (E2) and lipoamide dehydrogenase (E3). This Arabidopsis thaliana (Mouse-ear cress) protein is 2-oxoisovalerate dehydrogenase subunit alpha 2, mitochondrial.